Consider the following 69-residue polypeptide: Beta-defensin 1 (69 aa).

The N-terminal stretch at 1–21 (MKTHYFLLVMICFLFSQMEPG) is a signal peptide. The propeptide occupies 22 to 32 (VGILTSLGRRT). Disulfide bonds link C37/C66, C44/C59, and C49/C67.

The protein belongs to the beta-defensin family. In terms of assembly, monomer. Homodimer. As to expression, detected in kidney.

Its subcellular location is the secreted. It localises to the membrane. Functionally, has bactericidal activity. May act as a ligand for C-C chemokine receptor CCR6. Positively regulates the sperm motility and bactericidal activity in a CCR6-dependent manner. Binds to CCR6 and triggers Ca2+ mobilization in the sperm which is important for its motility. The sequence is that of Beta-defensin 1 (Defb1) from Mus musculus (Mouse).